A 485-amino-acid chain; its full sequence is Arginine/ornithine antiporter ArcD (485 aa).

Transmembrane regions (helical) follow at residues 23–43, 48–68, 79–99, 116–136, 148–168, 203–223, 246–266, 269–289, 323–343, 362–382, and 441–461; these read ALLP…LLGL, PLLW…GYTW, IVMG…IASW, LTPA…ATAI, IALV…AGAI, MFPN…VLGL, GTYT…GLAI, YPAL…SILI, LEGS…GGIL, SVGG…ALTA, and VLSY…VVIM.

It belongs to the NhaC Na(+)/H(+) (TC 2.A.35) antiporter family.

The protein localises to the cell membrane. It catalyses the reaction L-ornithine(in) + L-arginine(out) = L-ornithine(out) + L-arginine(in). Uptake of arginine from the medium in exchange for ornithine. In Halobacterium salinarum (strain ATCC 700922 / JCM 11081 / NRC-1) (Halobacterium halobium), this protein is Arginine/ornithine antiporter ArcD (arcD).